Reading from the N-terminus, the 472-residue chain is 3-isopropylmalate dehydratase large subunit (472 aa).

[4Fe-4S] cluster contacts are provided by C347, C407, and C410.

This sequence belongs to the aconitase/IPM isomerase family. LeuC type 1 subfamily. Heterodimer of LeuC and LeuD. [4Fe-4S] cluster serves as cofactor.

The enzyme catalyses (2R,3S)-3-isopropylmalate = (2S)-2-isopropylmalate. Its pathway is amino-acid biosynthesis; L-leucine biosynthesis; L-leucine from 3-methyl-2-oxobutanoate: step 2/4. Its function is as follows. Catalyzes the isomerization between 2-isopropylmalate and 3-isopropylmalate, via the formation of 2-isopropylmaleate. The protein is 3-isopropylmalate dehydratase large subunit of Bacillus licheniformis (strain ATCC 14580 / DSM 13 / JCM 2505 / CCUG 7422 / NBRC 12200 / NCIMB 9375 / NCTC 10341 / NRRL NRS-1264 / Gibson 46).